The sequence spans 662 residues: ATP-dependent zinc metalloprotease FtsH (662 aa).

Over residues 1-15 (MSENPVKRPGKDGSR) the composition is skewed to basic and acidic residues. Residues 1–35 (MSENPVKRPGKDGSRNKFKPVQEEGGTPGWFRSKG) are disordered. Residues 1-39 (MSENPVKRPGKDGSRNKFKPVQEEGGTPGWFRSKGESPQ) lie on the Cytoplasmic side of the membrane. Residues 40–60 (GKFPGFLLFLMAGLLMLFVFL) traverse the membrane as a helical segment. Residues 61-154 (RFFSGTDAPE…LKVEKGSSDL (94 aa)) lie on the Periplasmic side of the membrane. Residues 155–175 (NTFLALFAPWIIFAALYFFLF) traverse the membrane as a helical segment. The Cytoplasmic portion of the chain corresponds to 176–662 (RRMSGQNGAQ…QGALPNPVTA (487 aa)). Position 250-257 (250-257 (GPPGTGKT)) interacts with ATP. His472 lines the Zn(2+) pocket. The active site involves Glu473. 2 residues coordinate Zn(2+): His476 and Asp548.

This sequence in the central section; belongs to the AAA ATPase family. It in the C-terminal section; belongs to the peptidase M41 family. In terms of assembly, homohexamer. Requires Zn(2+) as cofactor.

The protein localises to the cell inner membrane. Its function is as follows. Acts as a processive, ATP-dependent zinc metallopeptidase for both cytoplasmic and membrane proteins. Plays a role in the quality control of integral membrane proteins. In Pelodictyon phaeoclathratiforme (strain DSM 5477 / BU-1), this protein is ATP-dependent zinc metalloprotease FtsH.